Here is a 206-residue protein sequence, read N- to C-terminus: Orotate phosphoribosyltransferase (206 aa).

5-phospho-alpha-D-ribose 1-diphosphate is bound by residues Arg93, Lys97, His99, and 119–127; that span reads EDLISTGGT. Ser123 is an orotate binding site.

It belongs to the purine/pyrimidine phosphoribosyltransferase family. PyrE subfamily. As to quaternary structure, homodimer. It depends on Mg(2+) as a cofactor.

It carries out the reaction orotidine 5'-phosphate + diphosphate = orotate + 5-phospho-alpha-D-ribose 1-diphosphate. Its pathway is pyrimidine metabolism; UMP biosynthesis via de novo pathway; UMP from orotate: step 1/2. Its function is as follows. Catalyzes the transfer of a ribosyl phosphate group from 5-phosphoribose 1-diphosphate to orotate, leading to the formation of orotidine monophosphate (OMP). This is Orotate phosphoribosyltransferase from Bacillus caldolyticus.